Consider the following 339-residue polypeptide: Dihydroorotase (339 aa).

Residues histidine 12 and histidine 14 each coordinate Zn(2+). Substrate contacts are provided by residues 14–16 (HVR) and asparagine 40. The Zn(2+) site is built by lysine 94, histidine 133, histidine 167, and aspartate 239. The residue at position 94 (lysine 94) is an N6-carboxylysine. Histidine 133 is a binding site for substrate. Residue aspartate 239 is part of the active site. Substrate contacts are provided by histidine 243 and alanine 255.

This sequence belongs to the metallo-dependent hydrolases superfamily. DHOase family. Class II DHOase subfamily. As to quaternary structure, homodimer. Zn(2+) serves as cofactor.

It catalyses the reaction (S)-dihydroorotate + H2O = N-carbamoyl-L-aspartate + H(+). The protein operates within pyrimidine metabolism; UMP biosynthesis via de novo pathway; (S)-dihydroorotate from bicarbonate: step 3/3. Its function is as follows. Catalyzes the reversible cyclization of carbamoyl aspartate to dihydroorotate. The sequence is that of Dihydroorotase from Helicobacter pylori (strain P12).